A 461-amino-acid polypeptide reads, in one-letter code: Coronin-1A (461 aa).

Ser-2 carries the N-acetylserine modification. Ser-2 is modified (phosphoserine; by PKC). 7 WD repeats span residues 13 to 63, 73 to 110, 123 to 160, 164 to 204, 207 to 251, 258 to 296, and 302 to 349; these read HVFG…LVLP, NVPM…MVWE, PVVT…LVWD, GVAV…RIIE, KGTI…ALWD, PLSL…RYFE, and PFLH…EPIA. Over residues 404–418 the composition is skewed to basic and acidic residues; sequence LRVNRGLDTGRKRTT. Residues 404–429 form a disordered region; that stretch reads LRVNRGLDTGRKRTTPEASGAPSSDA. Thr-412 is modified (phosphothreonine; by PKC). Phosphothreonine is present on Thr-418. Residue Ser-422 is modified to Phosphoserine. Residues 424–460 adopt a coiled-coil conformation; the sequence is APSSDAISRLEEEMRKLQATVQELQKRLDRLEETVQA. At Lys-449 the chain carries N6-acetyllysine.

Belongs to the WD repeat coronin family. Binds actin. Post-translationally, phosphorylation at Thr-412 by PKC strongly down-regulates the association with actin. In terms of processing, polyubiquitinated by RNF128 with 'Lys-48'-linked chains, leading to proteasomal degradation. In terms of tissue distribution, expressed in brain, thymus, spleen, bone marrow and lymph node. Low in lung and gut.

The protein localises to the cytoplasm. Its subcellular location is the cytoskeleton. It localises to the cell cortex. It is found in the cytoplasmic vesicle. The protein resides in the phagosome membrane. Functionally, may be a crucial component of the cytoskeleton of highly motile cells, functioning both in the invagination of large pieces of plasma membrane, as well as in forming protrusions of the plasma membrane involved in cell locomotion. In mycobacteria-infected macrophages, its retention on the phagosomal membrane prevents fusion between phagosomes and lysosomes. The polypeptide is Coronin-1A (CORO1A) (Bos taurus (Bovine)).